The primary structure comprises 90 residues: Molybdopterin synthase sulfur carrier subunit (90 aa).

Position 90 is a 1-thioglycine; alternate (Gly-90). Gly-90 is modified (glycyl adenylate; alternate).

Belongs to the MoaD family. MOCS2A subfamily. As to quaternary structure, heterotetramer; composed of 2 small (Mocs2A) and 2 large (Mocs2B) subunits. C-terminal thiocarboxylation occurs in 2 steps, it is first acyl-adenylated (-COAMP) via the hesA/moeB/thiF part of MOCS3, then thiocarboxylated (-COSH) via the rhodanese domain of MOCS3.

The protein resides in the cytoplasm. It functions in the pathway cofactor biosynthesis; molybdopterin biosynthesis. Its function is as follows. Acts as a sulfur carrier required for molybdopterin biosynthesis. Component of the molybdopterin synthase complex that catalyzes the conversion of precursor Z into molybdopterin by mediating the incorporation of 2 sulfur atoms into precursor Z to generate a dithiolene group. In the complex, serves as sulfur donor by being thiocarboxylated (-COSH) at its C-terminus by MOCS3. After interaction with Mocs2B, the sulfur is then transferred to precursor Z to form molybdopterin. This Drosophila ananassae (Fruit fly) protein is Molybdopterin synthase sulfur carrier subunit.